Reading from the N-terminus, the 510-residue chain is ATP synthase subunit alpha (510 aa).

ATP is bound at residue 169 to 176 (GDRQTGKT).

Belongs to the ATPase alpha/beta chains family. As to quaternary structure, F-type ATPases have 2 components, CF(1) - the catalytic core - and CF(0) - the membrane proton channel. CF(1) has five subunits: alpha(3), beta(3), gamma(1), delta(1), epsilon(1). CF(0) has four main subunits: a(1), b(1), b'(1) and c(9-12).

The protein resides in the cell inner membrane. It carries out the reaction ATP + H2O + 4 H(+)(in) = ADP + phosphate + 5 H(+)(out). Functionally, produces ATP from ADP in the presence of a proton gradient across the membrane. The alpha chain is a regulatory subunit. This Rhodopseudomonas palustris (strain ATCC BAA-98 / CGA009) protein is ATP synthase subunit alpha.